Reading from the N-terminus, the 95-residue chain is NADH-quinone oxidoreductase subunit 11 (95 aa).

3 consecutive transmembrane segments (helical) span residues 1-21, 25-45, and 59-79; these read MSYL…VLTR, ILVF…LVGF, and MVIA…VAIF.

Belongs to the complex I subunit 4L family. In terms of assembly, NDH-1 is composed of 15 different subunits, Nqo1 to Nqo15. The complex has a L-shaped structure, with the hydrophobic arm (subunits Nqo7, Nqo8 and Nqo10 to Nqo14) embedded in the membrane and the hydrophilic peripheral arm (subunits Nqo1 to Nqo6, Nqo9 and Nqo15) protruding into the bacterial cytoplasm. The hydrophilic domain contains all the redox centers.

It is found in the cell inner membrane. It catalyses the reaction a quinone + NADH + 5 H(+)(in) = a quinol + NAD(+) + 4 H(+)(out). Its function is as follows. NDH-1 shuttles electrons from NADH, via FMN and iron-sulfur (Fe-S) centers, to quinones in the respiratory chain. The immediate electron acceptor for the enzyme in this species is menaquinone. Couples the redox reaction to proton translocation (for every two electrons transferred, four hydrogen ions are translocated across the cytoplasmic membrane), and thus conserves the redox energy in a proton gradient required for the synthesis of ATP. The chain is NADH-quinone oxidoreductase subunit 11 (nqo11) from Thermus thermophilus (strain ATCC 27634 / DSM 579 / HB8).